The chain runs to 184 residues: Photosystem I assembly protein Ycf4 (184 aa).

The next 2 helical transmembrane spans lie at 21-43 (NFFWACILFLGSLGFFLVGISSY) and 58-78 (LFVPQGIVMCFYGIAGLFISS).

This sequence belongs to the Ycf4 family.

Its subcellular location is the plastid. The protein localises to the chloroplast thylakoid membrane. Its function is as follows. Seems to be required for the assembly of the photosystem I complex. In Pinus thunbergii (Japanese black pine), this protein is Photosystem I assembly protein Ycf4.